The primary structure comprises 541 residues: 2-hydroxyacylsphingosine 1-beta-galactosyltransferase (541 aa).

The first 20 residues, 1–20, serve as a signal peptide directing secretion; sequence MKSYTPYFMLLWSAVGIARA. Asn78, Asn333, and Asn442 each carry an N-linked (GlcNAc...) asparagine glycan. The helical transmembrane segment at 472-492 threads the bilayer; the sequence is YFLLDIAFVLLLGAVLLYFIL. Residues 518-541 form a disordered region; that stretch reads HYQNGIRNGKYKGNGRVKHEKKVR. Positions 526–541 are enriched in basic residues; sequence GKYKGNGRVKHEKKVR.

This sequence belongs to the UDP-glycosyltransferase family.

The protein localises to the membrane. It localises to the endoplasmic reticulum. The enzyme catalyses an N-acylsphing-4-enine + UDP-alpha-D-galactose = a beta-D-galactosyl-(1&lt;-&gt;1')-N-acylsphing-4-enine + UDP + H(+). The catalysed reaction is N-(2-hydroxy-hexanoyl)-sphing-4-enine + UDP-alpha-D-galactose = N-(2-hydroxy-hexanoyl)-beta-D-galactosyl-sphing-4-enine + UDP + H(+). It carries out the reaction N-(2-hydroxy-hexanoyl)-sphinganine + UDP-alpha-D-galactose = N-(2-hydroxyhexanoyl)-beta-D-galactosylsphinganine + UDP + H(+). It catalyses the reaction an N-acyl-sphingoid base + UDP-alpha-D-galactose = a D-galactosylceramide + UDP + H(+). Its pathway is sphingolipid metabolism; galactosylceramide biosynthesis. In terms of biological role, catalyzes the transfer of galactose to ceramide, a key enzymatic step in the biosynthesis of galactocerebrosides, which are abundant sphingolipids of the myelin membrane of the central nervous system and peripheral nervous system. Galactosylates both hydroxy- and non-hydroxy fatty acid-containing ceramides and diglycerides. This is 2-hydroxyacylsphingosine 1-beta-galactosyltransferase from Mus musculus (Mouse).